Consider the following 349-residue polypeptide: Anthranilate phosphoribosyltransferase (349 aa).

Residues G82, 85–86 (GD), 92–95 (NVST), 110–118 (KHGNRGVSS), and S122 each bind 5-phospho-alpha-D-ribose 1-diphosphate. G82 is a binding site for anthranilate. S94 contributes to the Mg(2+) binding site. An anthranilate-binding site is contributed by N113. Anthranilate is bound at residue R168. Residues D227 and E228 each contribute to the Mg(2+) site.

This sequence belongs to the anthranilate phosphoribosyltransferase family. Homodimer. The cofactor is Mg(2+).

The enzyme catalyses N-(5-phospho-beta-D-ribosyl)anthranilate + diphosphate = 5-phospho-alpha-D-ribose 1-diphosphate + anthranilate. Its pathway is amino-acid biosynthesis; L-tryptophan biosynthesis; L-tryptophan from chorismate: step 2/5. Catalyzes the transfer of the phosphoribosyl group of 5-phosphorylribose-1-pyrophosphate (PRPP) to anthranilate to yield N-(5'-phosphoribosyl)-anthranilate (PRA). The sequence is that of Anthranilate phosphoribosyltransferase from Acinetobacter baumannii (strain SDF).